A 228-amino-acid chain; its full sequence is Probable octanoyltransferase (228 aa).

A BPL/LPL catalytic domain is found at Ser-27–Val-198. Residues Arg-65 to His-72, Ser-129 to Gly-131, and Gly-142 to Ala-144 each bind substrate. Cys-160 (acyl-thioester intermediate) is an active-site residue.

It belongs to the LipB family.

The protein resides in the cytoplasm. The catalysed reaction is octanoyl-[ACP] + L-lysyl-[protein] = N(6)-octanoyl-L-lysyl-[protein] + holo-[ACP] + H(+). It functions in the pathway protein modification; protein lipoylation via endogenous pathway; protein N(6)-(lipoyl)lysine from octanoyl-[acyl-carrier-protein]: step 1/2. In terms of biological role, catalyzes the transfer of endogenously produced octanoic acid from octanoyl-acyl-carrier-protein onto the lipoyl domains of lipoate-dependent enzymes. Lipoyl-ACP can also act as a substrate although octanoyl-ACP is likely to be the physiological substrate. The polypeptide is Probable octanoyltransferase (Pyrobaculum calidifontis (strain DSM 21063 / JCM 11548 / VA1)).